Reading from the N-terminus, the 87-residue chain is Large ribosomal subunit protein bL31B (87 aa).

This sequence belongs to the bacterial ribosomal protein bL31 family. Type B subfamily. As to quaternary structure, part of the 50S ribosomal subunit.

The sequence is that of Large ribosomal subunit protein bL31B from Burkholderia pseudomallei (strain 1106a).